The primary structure comprises 254 residues: Ciliary microtubule associated protein 1A (254 aa).

STPGR repeat units follow at residues 180–205 and 216–241; these read PGPA…MAAR and PGPG…FGIK. The segment at 207–226 is disordered; the sequence is EPPGDKTLKPGPGAHSPEKV.

Belongs to the CIMAP family. As to quaternary structure, microtubule inner protein component of sperm flagellar doublet microtubules. As to expression, testis-specific.

The protein resides in the cytoplasm. The protein localises to the cytoskeleton. Its subcellular location is the flagellum axoneme. Its function is as follows. Outer dense fibers are filamentous structures located on the outside of the axoneme in the midpiece and principal piece of the mammalian sperm tail. May help to maintain the passive elastic structures and elastic recoil of the sperm tail. This Homo sapiens (Human) protein is Ciliary microtubule associated protein 1A.